A 432-amino-acid polypeptide reads, in one-letter code: Adenylosuccinate synthetase (432 aa).

GTP contacts are provided by residues 13 to 19 (GDEGKGK) and 41 to 43 (GHT). D14 acts as the Proton acceptor in catalysis. 2 residues coordinate Mg(2+): D14 and G41. IMP is bound by residues 14-17 (DEGK), 39-42 (NAGH), T130, R144, Q225, T240, and R304. Residue H42 is the Proton donor of the active site. 300–306 (AVTGRPR) serves as a coordination point for substrate. GTP contacts are provided by residues R306, 332 to 334 (KLD), and 415 to 417 (STG).

Belongs to the adenylosuccinate synthetase family. Homodimer. Requires Mg(2+) as cofactor.

The protein localises to the cytoplasm. The catalysed reaction is IMP + L-aspartate + GTP = N(6)-(1,2-dicarboxyethyl)-AMP + GDP + phosphate + 2 H(+). Its pathway is purine metabolism; AMP biosynthesis via de novo pathway; AMP from IMP: step 1/2. Its function is as follows. Plays an important role in the de novo pathway of purine nucleotide biosynthesis. Catalyzes the first committed step in the biosynthesis of AMP from IMP. This chain is Adenylosuccinate synthetase, found in Glaesserella parasuis serovar 5 (strain SH0165) (Haemophilus parasuis).